Consider the following 54-residue polypeptide: Ribulose bisphosphate carboxylase large chain (54 aa).

A propeptide spanning residues 1-2 (MS) is cleaved from the precursor. P3 bears the N-acetylproline mark. N6,N6,N6-trimethyllysine is present on K14.

It belongs to the RuBisCO large chain family. Type I subfamily. Heterohexadecamer of 8 large chains and 8 small chains.

It is found in the plastid. Its subcellular location is the chloroplast. It catalyses the reaction 2 (2R)-3-phosphoglycerate + 2 H(+) = D-ribulose 1,5-bisphosphate + CO2 + H2O. It carries out the reaction D-ribulose 1,5-bisphosphate + O2 = 2-phosphoglycolate + (2R)-3-phosphoglycerate + 2 H(+). Its function is as follows. RuBisCO catalyzes two reactions: the carboxylation of D-ribulose 1,5-bisphosphate, the primary event in carbon dioxide fixation, as well as the oxidative fragmentation of the pentose substrate in the photorespiration process. Both reactions occur simultaneously and in competition at the same active site. This Ilex ciliospinosa (Sichuan holly) protein is Ribulose bisphosphate carboxylase large chain (rbcL).